The primary structure comprises 128 residues: Small ribosomal subunit protein eS8 (128 aa).

The segment at 1-37 is disordered; the sequence is MGYFQGNDFRKITGGKKGKHRDKRKFELGSPPTETKL. A compositionally biased stretch (basic residues) spans 13–23; sequence TGGKKGKHRDK.

This sequence belongs to the eukaryotic ribosomal protein eS8 family. As to quaternary structure, part of the 30S ribosomal subunit.

The chain is Small ribosomal subunit protein eS8 from Sulfurisphaera tokodaii (strain DSM 16993 / JCM 10545 / NBRC 100140 / 7) (Sulfolobus tokodaii).